The sequence spans 266 residues: Translation initiation factor 2 subunit alpha (266 aa).

The S1 motif domain maps to 10-81; it reads GELVVGKIDE…SAQQIDLSIK (72 aa). The interval 233 to 266 is disordered; the sequence is AEDALEESADRAAKVVEQHGGSGQFHRERSEDDE. 2 stretches are compositionally biased toward basic and acidic residues: residues 240-249 and 257-266; these read SADRAAKVVE and FHRERSEDDE.

Belongs to the eIF-2-alpha family. As to quaternary structure, heterotrimer composed of an alpha, a beta and a gamma chain.

Functionally, eIF-2 functions in the early steps of protein synthesis by forming a ternary complex with GTP and initiator tRNA. The protein is Translation initiation factor 2 subunit alpha of Haloarcula marismortui (strain ATCC 43049 / DSM 3752 / JCM 8966 / VKM B-1809) (Halobacterium marismortui).